Consider the following 36-residue polypeptide: Kappa-theraphotoxin-Pg1b (36 aa).

Cystine bridges form between C4-C19, C11-C24, and C18-C31.

This sequence belongs to the neurotoxin 10 (Hwtx-1) family. 44 (Jztx-4) subfamily. Expressed by the venom gland.

Its subcellular location is the secreted. Functionally, gating modifier of Kv2.1/KCNB1, Kv2.2/KCNB2 and Kv4.3/KCND3 channels. The polypeptide is Kappa-theraphotoxin-Pg1b (Chilobrachys guangxiensis (Chinese earth tiger tarantula)).